A 261-amino-acid chain; its full sequence is 3-deoxy-manno-octulosonate cytidylyltransferase 1 (261 aa).

This sequence belongs to the KdsB family.

It is found in the cytoplasm. It catalyses the reaction 3-deoxy-alpha-D-manno-oct-2-ulosonate + CTP = CMP-3-deoxy-beta-D-manno-octulosonate + diphosphate. Its pathway is nucleotide-sugar biosynthesis; CMP-3-deoxy-D-manno-octulosonate biosynthesis; CMP-3-deoxy-D-manno-octulosonate from 3-deoxy-D-manno-octulosonate and CTP: step 1/1. It functions in the pathway bacterial outer membrane biogenesis; lipopolysaccharide biosynthesis. In terms of biological role, activates KDO (a required 8-carbon sugar) for incorporation into bacterial lipopolysaccharide in Gram-negative bacteria. The protein is 3-deoxy-manno-octulosonate cytidylyltransferase 1 of Burkholderia lata (strain ATCC 17760 / DSM 23089 / LMG 22485 / NCIMB 9086 / R18194 / 383).